We begin with the raw amino-acid sequence, 479 residues long: MPRFVDRVVIHTWAGSGGNGCASIHRSKFKPLGGPDGGNGGRGGSVVFVVDPHVHTLLDFHFRPHITAPSGKQGMGNNRDGAAGADLEVKVPDGTVVLDEDGRLLADLVGAGTRFQAAAGGRGGLGNAALASRTRKVPGFALLGEQGESRDLTLELKSVADVGLIGFPSAGKSSLVSVISAAKPKIADYPFTTLVPNLGVVSVGEHAFTVADVPGLIPGASAGRGLGLDFLRHIERCAVLVHVVDCTSVEPGRDPILDIAALEAELAAYTPTLQGDTTLGDFAERPRAVVLNKIDVPDARELAEFVCDNIAAERGWPVFSVSTVTRENLQSLIFGLWQMISAYHAARSEPAPGRSLIRPVPVDDSGFTVEPDGQGGFVVTGTRPERWIHQTNFDNAEAVGYLADRLARLGVEDELLRVGAQPGCTVSIGGMTFDWEPQKPAGHPVAMSGRGTDARLESTDPVGTAERKVARHQRHKHGG.

An Obg domain is found at 2-159 (PRFVDRVVIH…RDLTLELKSV (158 aa)). Residues 160–341 (ADVGLIGFPS…LIFGLWQMIS (182 aa)) form the OBG-type G domain. GTP contacts are provided by residues 166-173 (GFPSAGKS), 191-195 (FTTLV), 212-215 (DVPG), 292-295 (NKID), and 322-324 (STV). Mg(2+) is bound by residues Ser-173 and Thr-193. One can recognise an OCT domain in the interval 359–437 (PVPVDDSGFT…IGGMTFDWEP (79 aa)). Positions 438–479 (QKPAGHPVAMSGRGTDARLESTDPVGTAERKVARHQRHKHGG) are disordered. Over residues 469-479 (VARHQRHKHGG) the composition is skewed to basic residues.

This sequence belongs to the TRAFAC class OBG-HflX-like GTPase superfamily. OBG GTPase family. As to quaternary structure, monomer. Requires Mg(2+) as cofactor.

The protein resides in the cytoplasm. Functionally, an essential GTPase which binds GTP, GDP and possibly (p)ppGpp with moderate affinity, with high nucleotide exchange rates and a fairly low GTP hydrolysis rate. Plays a role in control of the cell cycle, stress response, ribosome biogenesis and in those bacteria that undergo differentiation, in morphogenesis control. This is GTPase Obg from Mycobacterium leprae (strain Br4923).